Consider the following 497-residue polypeptide: G protein-coupled receptor gprM (497 aa).

Asn-3 is a glycosylation site (N-linked (GlcNAc...) asparagine). The next 5 helical transmembrane spans lie at 66–86 (ISVA…VLPV), 98–118 (FTLG…PLGV), 138–158 (CAFT…WSFL), 179–199 (WGAL…MLIL), and 221–241 (YWIP…ATMA). An N-linked (GlcNAc...) asparagine glycan is attached at Asn-259. 2 helical membrane passes run 293–313 (VTLV…FIEL) and 357–377 (LLLA…ILFA). A glycan (N-linked (GlcNAc...) asparagine) is linked at Asn-421. The tract at residues 428 to 497 (YKSPSPMVRS…APAVYREYDD (70 aa)) is disordered.

This sequence belongs to the G-protein coupled receptor GPR1/git3 family. Interacts with gpaA.

The protein resides in the cell membrane. Functionally, g protein-coupled receptor that plays a role in conidiation and regulation of the biosynthesis of secondary metabolites such as dihydroxynaphthalene (DHN)-melanin, via interaction with the G-protein complex alpha subunit gpaA. This is G protein-coupled receptor gprM from Aspergillus fumigatus (strain CBS 144.89 / FGSC A1163 / CEA10) (Neosartorya fumigata).